A 377-amino-acid polypeptide reads, in one-letter code: Glutamate 5-kinase (377 aa).

Lysine 22 is an ATP binding site. Positions 62, 149, and 161 each coordinate substrate. Residues 181–182 (TD) and 223–229 (TGGMVTK) each bind ATP. The 79-residue stretch at 285-363 (RGVLVADSGA…AQLRRLLGEE (79 aa)) folds into the PUA domain.

Belongs to the glutamate 5-kinase family.

The protein resides in the cytoplasm. The catalysed reaction is L-glutamate + ATP = L-glutamyl 5-phosphate + ADP. It participates in amino-acid biosynthesis; L-proline biosynthesis; L-glutamate 5-semialdehyde from L-glutamate: step 1/2. In terms of biological role, catalyzes the transfer of a phosphate group to glutamate to form L-glutamate 5-phosphate. The chain is Glutamate 5-kinase from Bifidobacterium animalis subsp. lactis (strain AD011).